The primary structure comprises 59 residues: Large ribosomal subunit protein bL32 (59 aa).

A compositionally biased stretch (basic residues) spans 1 to 16 (MAVPKRKTSPSRRGMR). The interval 1-59 (MAVPKRKTSPSRRGMRRSADALKAPTYVEDKNSGELRRPHHIDLKSGMYRGRQVLEPKE) is disordered. Residues 28-44 (VEDKNSGELRRPHHIDL) show a composition bias toward basic and acidic residues.

It belongs to the bacterial ribosomal protein bL32 family.

This chain is Large ribosomal subunit protein bL32, found in Brucella abortus (strain S19).